Consider the following 327-residue polypeptide: GTPase Obg (327 aa).

One can recognise an Obg domain in the interval 1–159; that stretch reads MQFIDQANII…WEVQLELKLL (159 aa). Positions 160-327 constitute an OBG-type G domain; it reads AEVGIIGLPN…SLLSEVWKRI (168 aa). ATP-binding positions include 166–173, 191–195, 213–216, 280–283, and 309–311; these read GLPNAGKS, FTTLI, DIPG, NKIE, and SSS. Positions 173 and 193 each coordinate Mg(2+).

It belongs to the TRAFAC class OBG-HflX-like GTPase superfamily. OBG GTPase family. In terms of assembly, monomer. Mg(2+) is required as a cofactor.

Its subcellular location is the cytoplasm. An essential GTPase which binds GTP, GDP and possibly (p)ppGpp with moderate affinity, with high nucleotide exchange rates and a fairly low GTP hydrolysis rate. Plays a role in control of the cell cycle, stress response, ribosome biogenesis and in those bacteria that undergo differentiation, in morphogenesis control. The chain is GTPase Obg from Prochlorococcus marinus (strain AS9601).